Here is a 714-residue protein sequence, read N- to C-terminus: Glutamine-dependent NAD(+) synthetase (714 aa).

The 271-residue stretch at 5 to 275 folds into the CN hydrolase domain; the sequence is ITLATCNLNQ…VEVVTATVDL (271 aa). Residue glutamate 45 is the Proton acceptor; for glutaminase activity of the active site. Lysine 114 functions as the For glutaminase activity in the catalytic mechanism. The active-site Nucleophile; for glutaminase activity is cysteine 175. The interval 329–714 is ligase; it reads YHSPEEEIAL…GSTLDIMSID (386 aa). Residue 359–366 coordinates ATP; that stretch reads PLSGGIDS. Serine 361 is a catalytic residue.

It in the C-terminal section; belongs to the NAD synthetase family.

The enzyme catalyses deamido-NAD(+) + L-glutamine + ATP + H2O = L-glutamate + AMP + diphosphate + NAD(+) + H(+). The protein operates within cofactor biosynthesis; NAD(+) biosynthesis; NAD(+) from deamido-NAD(+) (L-Gln route): step 1/1. The sequence is that of Glutamine-dependent NAD(+) synthetase (QNS1) from Saccharomyces cerevisiae (strain ATCC 204508 / S288c) (Baker's yeast).